The chain runs to 250 residues: 2,3-bisphosphoglycerate-dependent phosphoglycerate mutase (250 aa).

Residues 8–15 (RHGESQWN), 21–22 (TG), arginine 60, 87–90 (ERHY), lysine 98, 114–115 (RR), and 183–184 (GN) contribute to the substrate site. Residue histidine 9 is the Tele-phosphohistidine intermediate of the active site. The active-site Proton donor/acceptor is the glutamate 87.

This sequence belongs to the phosphoglycerate mutase family. BPG-dependent PGAM subfamily. In terms of assembly, homodimer.

It carries out the reaction (2R)-2-phosphoglycerate = (2R)-3-phosphoglycerate. The protein operates within carbohydrate degradation; glycolysis; pyruvate from D-glyceraldehyde 3-phosphate: step 3/5. Functionally, catalyzes the interconversion of 2-phosphoglycerate and 3-phosphoglycerate. This chain is 2,3-bisphosphoglycerate-dependent phosphoglycerate mutase, found in Bordetella parapertussis (strain 12822 / ATCC BAA-587 / NCTC 13253).